We begin with the raw amino-acid sequence, 102 residues long: Large ribosomal subunit protein bL36m (102 aa).

This sequence belongs to the bacterial ribosomal protein bL36 family. As to quaternary structure, component of the mitochondrial ribosome large subunit (39S) which comprises a 16S rRNA and about 50 distinct proteins.

It localises to the mitochondrion. The chain is Large ribosomal subunit protein bL36m (Mrpl36) from Mus musculus (Mouse).